We begin with the raw amino-acid sequence, 258 residues long: Phosphate import ATP-binding protein PstB 1 (258 aa).

Positions 5–247 constitute an ABC transporter domain; the sequence is LDLTDVNIYY…EKIFSNPNQK (243 aa). 37-44 lines the ATP pocket; sequence GPSGCGKT.

This sequence belongs to the ABC transporter superfamily. Phosphate importer (TC 3.A.1.7) family. In terms of assembly, the complex is composed of two ATP-binding proteins (PstB), two transmembrane proteins (PstC and PstA) and a solute-binding protein (PstS).

The protein resides in the cell membrane. It carries out the reaction phosphate(out) + ATP + H2O = ADP + 2 phosphate(in) + H(+). Functionally, part of the ABC transporter complex PstSACB involved in phosphate import. Responsible for energy coupling to the transport system. In Mycobacterium bovis (strain ATCC BAA-935 / AF2122/97), this protein is Phosphate import ATP-binding protein PstB 1.